Reading from the N-terminus, the 151-residue chain is Transcription antitermination protein NusB (151 aa).

Belongs to the NusB family.

In terms of biological role, involved in transcription antitermination. Required for transcription of ribosomal RNA (rRNA) genes. Binds specifically to the boxA antiterminator sequence of the ribosomal RNA (rrn) operons. The sequence is that of Transcription antitermination protein NusB from Thermus thermophilus (strain ATCC BAA-163 / DSM 7039 / HB27).